Here is a 1695-residue protein sequence, read N- to C-terminus: Sialoadhesin (1695 aa).

An N-terminal signal peptide occupies residues 1 to 19 (MCVLFSLLLLASVFSLGQT). The 117-residue stretch at 20 to 136 (TWGVSSPKNV…DVKGTTVTVT (117 aa)) folds into the Ig-like V-type domain. The Extracellular portion of the chain corresponds to 20 to 1639 (TWGVSSPKNV…ALHQLQLFQR (1620 aa)). 4 disulfides stabilise this stretch: Cys36–Cys166, Cys41–Cys98, Cys160–Cys218, and Cys263–Cys306. Residues Tyr63, Arg116, and 122–126 (SNRWL) each bind N-acetylneuraminate. 16 Ig-like C2-type domains span residues 153 to 235 (GMER…YLQV), 239 to 321 (PKGV…SPLS), 326 to 406 (MAEV…SPLS), 416 to 508 (PDLT…LDFY), 509 to 594 (ANVA…TVLT), 602 to 701 (PTFT…ASFN), 704 to 781 (ATVL…AQLS), 795 to 890 (PKLS…FQVR), 894 to 973 (VQVS…APVS), 980 to 1079 (PRHV…ADFD), 1081 to 1161 (QAVR…RPVT), 1172 to 1264 (RLTY…MNPS), 1245 to 1337 (KANT…ASLQ), 1342 to 1439 (PRDA…RLLT), 1442 to 1520 (DIRV…ATTS), and 1534 to 1627 (PTLI…AYFG). Asn159 is a glycosylation site (N-linked (GlcNAc...) asparagine). Asn266, Asn299, and Asn340 each carry an N-linked (GlcNAc...) asparagine glycan. 2 disulfides stabilise this stretch: Cys347–Cys391 and Cys434–Cys492. Asn500 carries an N-linked (GlcNAc...) asparagine glycan. An intrachain disulfide couples Cys532 to Cys576. The N-linked (GlcNAc...) asparagine glycan is linked to Asn583. An intrachain disulfide couples Cys625 to Cys685. Asn693, Asn722, and Asn737 each carry an N-linked (GlcNAc...) asparagine glycan. 2 cysteine pairs are disulfide-bonded: Cys725–Cys770 and Cys813–Cys872. The short motif at 827-829 (RGD) is the Cell attachment site element. An N-linked (GlcNAc...) asparagine glycan is attached at Asn882. 2 disulfides stabilise this stretch: Cys912/Cys956 and Cys1001/Cys1063. N-linked (GlcNAc...) asparagine glycosylation is found at Asn1090 and Asn1100. Disulfide bonds link Cys1103–Cys1145 and Cys1189–Cys1237. An N-linked (GlcNAc...) asparagine glycan is attached at Asn1247. 2 disulfides stabilise this stretch: Cys1277/Cys1320 and Cys1363/Cys1422. Residues Asn1460 and Asn1474 are each glycosylated (N-linked (GlcNAc...) asparagine). Cystine bridges form between Cys1463–Cys1509 and Cys1552–Cys1611. The helical transmembrane segment at 1640 to 1660 (LLWVLGFLAGFLCLLLGLVAY) threads the bilayer. The Cytoplasmic segment spans residues 1661 to 1695 (HTWRKKSSTKLNEDENSAEMATKKNTIQEEVVAAL).

It belongs to the immunoglobulin superfamily. SIGLEC (sialic acid binding Ig-like lectin) family. In terms of assembly, interacts with CLEC10A. In terms of tissue distribution, detected in lymph node in the subcapsular sinus, interfollicular regions, and T and B-cell boundary (at protein level). Expressed by macrophages in various tissues. Highest expression in spleen and lymph node with lower amounts in lung, liver, bone marrow, heart and skin. No expression in thymus, kidney, brain or small intestine.

It is found in the cell membrane. It localises to the secreted. Functionally, macrophage-restricted adhesion molecule that mediates sialic-acid dependent binding to lymphocytes, including granulocytes, monocytes, natural killer cells, B-cells and CD8 T-cells. Plays a crucial role in limiting bacterial dissemination by engaging sialylated bacteria to promote effective phagocytosis and antigen presentation for the adaptive immune response. Mediates the uptake of various enveloped viruses via sialic acid recognition and subsequently induces the formation of intracellular compartments filled with virions (VCCs). In turn, enhances macrophage-to-T-cell transmission of several viruses including murine leukemia virus. Acts as an endocytic receptor mediating clathrin dependent endocytosis. Preferentially binds to alpha-2,3-linked sialic acid. Binds to SPN/CD43 on T-cells. May play a role in hemopoiesis. Plays a role in the inhibition of antiviral innate immune by promoting TBK1 degradation via TYROBP and TRIM27-mediated ubiquitination. The sequence is that of Sialoadhesin (Siglec1) from Mus musculus (Mouse).